The chain runs to 298 residues: Putative F-box and FNIP repeat-containing protein R286 (298 aa).

The F-box domain occupies 4 to 48 (LNVLESHVILHIIEFLPDHEKIKFMSTCKSLYEFRCHVTYNNFYV). 2 FNIP repeats span residues 124 to 165 (FNKP…LGHN) and 255 to 297 (WNFD…FISR).

The polypeptide is Putative F-box and FNIP repeat-containing protein R286 (Acanthamoeba polyphaga (Amoeba)).